We begin with the raw amino-acid sequence, 86 residues long: Putative membrane protein insertion efficiency factor (86 aa).

The protein belongs to the UPF0161 family.

The protein resides in the cell inner membrane. Could be involved in insertion of integral membrane proteins into the membrane. This chain is Putative membrane protein insertion efficiency factor, found in Pseudomonas aeruginosa (strain UCBPP-PA14).